Reading from the N-terminus, the 384-residue chain is uncharacterized protein (384 aa).

To S.pombe SpAC2E11.17.

This is an uncharacterized protein from Schizosaccharomyces pombe (strain 972 / ATCC 24843) (Fission yeast).